Reading from the N-terminus, the 493-residue chain is NAD(P)H dehydrogenase (quinone) (493 aa).

Residues 12–13 (PA), 35–37 (DCD), 42–43 (AA), lysine 52, glycine 117, aspartate 317, 324–325 (LA), and tyrosine 450 each bind FAD.

Belongs to the class-I pyridine nucleotide-disulfide oxidoreductase family. Homotetramer. The cofactor is FAD.

The enzyme catalyses a quinone + NADH + H(+) = a quinol + NAD(+). It catalyses the reaction a quinone + NADPH + H(+) = a quinol + NADP(+). May contribute to virulence by increasing resistance to reactive oxygen intermediates. It can reduce 2,6-dimethyl-1,4-benzoquinone (DMBQ), 5-hydroxy-1,4-naphthaquinone (5-HNQ) and menadione. The polypeptide is NAD(P)H dehydrogenase (quinone) (lpdA) (Mycobacterium tuberculosis (strain CDC 1551 / Oshkosh)).